The primary structure comprises 134 residues: Large ribosomal subunit protein bL19 (134 aa).

Residues 110 to 134 (ARLHQEEGPSSAAPASTPPAAAPQA) are disordered. The span at 125-134 (STPPAAAPQA) shows a compositional bias: pro residues.

It belongs to the bacterial ribosomal protein bL19 family.

In terms of biological role, this protein is located at the 30S-50S ribosomal subunit interface and may play a role in the structure and function of the aminoacyl-tRNA binding site. The chain is Large ribosomal subunit protein bL19 from Anaeromyxobacter sp. (strain Fw109-5).